Consider the following 118-residue polypeptide: Non-specific lipid-transfer protein D (118 aa).

Residues 1 to 25 (MAGLMKLACLIFACMIVAGPITSNA) form the signal peptide. 4 disulfides stabilise this stretch: Cys29-Cys77, Cys39-Cys54, Cys55-Cys100, and Cys75-Cys114.

The protein belongs to the plant LTP family.

Its function is as follows. Plant non-specific lipid-transfer proteins transfer phospholipids as well as galactolipids across membranes. May play a role in wax or cutin deposition in the cell walls of expanding epidermal cells and certain secretory tissues. The polypeptide is Non-specific lipid-transfer protein D (WAX9D) (Brassica oleracea var. italica (Broccoli)).